The sequence spans 346 residues: Sensor protein kinase GraS (346 aa).

The next 2 membrane-spanning stretches (helical) occupy residues 18 to 38 (IFWILFLNILMLGISLIDYDF) and 43 to 63 (LFYIVSLNLSLTLIFLILTFF). The region spanning 126-332 (EFVHDIKTPV…TVKLIFPLQN (207 aa)) is the Histidine kinase domain.

In terms of assembly, interacts with GraX.

It is found in the cell membrane. It catalyses the reaction ATP + protein L-histidine = ADP + protein N-phospho-L-histidine.. In terms of biological role, member of the two-component regulatory system GraR/GraS involved in resistance against cationic antimicrobial peptides (CAMPs). Functions as a sensor protein kinase which phosphorylates GraR through the auxiliary protein GraX. In turn, GraR up-regulates many genes such as adhesins, exoproteins, transporters, toxins, and proteins involved in cell wall synthesis. Down-regulates the expression of many genes involved in RNA and amino acid synthesis or glycolysis. The sequence is that of Sensor protein kinase GraS (graS) from Staphylococcus aureus (strain MRSA252).